Reading from the N-terminus, the 190-residue chain is Elongation factor P (190 aa).

Lys34 carries the post-translational modification N6-(3,6-diaminohexanoyl)-5-hydroxylysine.

It belongs to the elongation factor P family. Post-translationally, may be beta-lysylated on the epsilon-amino group of Lys-34 by the combined action of EpmA and EpmB, and then hydroxylated on the C5 position of the same residue by EpmC (if this protein is present). Lysylation is critical for the stimulatory effect of EF-P on peptide-bond formation. The lysylation moiety may extend toward the peptidyltransferase center and stabilize the terminal 3-CCA end of the tRNA. Hydroxylation of the C5 position on Lys-34 may allow additional potential stabilizing hydrogen-bond interactions with the P-tRNA.

The protein resides in the cytoplasm. It functions in the pathway protein biosynthesis; polypeptide chain elongation. In terms of biological role, involved in peptide bond synthesis. Alleviates ribosome stalling that occurs when 3 or more consecutive Pro residues or the sequence PPG is present in a protein, possibly by augmenting the peptidyl transferase activity of the ribosome. Modification of Lys-34 is required for alleviation. The polypeptide is Elongation factor P (Hahella chejuensis (strain KCTC 2396)).